Reading from the N-terminus, the 404-residue chain is Phosphoglycerate kinase (404 aa).

Substrate-binding positions include 22-24 (DFN), Arg-37, 60-63 (HLGR), Arg-120, and Arg-160. ATP is bound by residues Lys-215, Glu-333, and 360 to 363 (GGDS).

It belongs to the phosphoglycerate kinase family. In terms of assembly, monomer.

Its subcellular location is the cytoplasm. It catalyses the reaction (2R)-3-phosphoglycerate + ATP = (2R)-3-phospho-glyceroyl phosphate + ADP. It participates in carbohydrate degradation; glycolysis; pyruvate from D-glyceraldehyde 3-phosphate: step 2/5. This Latilactobacillus sakei subsp. sakei (strain 23K) (Lactobacillus sakei subsp. sakei) protein is Phosphoglycerate kinase.